The primary structure comprises 61 residues: Large ribosomal subunit protein uL30 (61 aa).

This sequence belongs to the universal ribosomal protein uL30 family. Part of the 50S ribosomal subunit.

The sequence is that of Large ribosomal subunit protein uL30 from Chromohalobacter salexigens (strain ATCC BAA-138 / DSM 3043 / CIP 106854 / NCIMB 13768 / 1H11).